The sequence spans 129 residues: Small ribosomal subunit protein uS11 (129 aa).

The protein belongs to the universal ribosomal protein uS11 family. Part of the 30S ribosomal subunit. Interacts with proteins S7 and S18. Binds to IF-3.

Located on the platform of the 30S subunit, it bridges several disparate RNA helices of the 16S rRNA. Forms part of the Shine-Dalgarno cleft in the 70S ribosome. This chain is Small ribosomal subunit protein uS11, found in Pelotomaculum thermopropionicum (strain DSM 13744 / JCM 10971 / SI).